We begin with the raw amino-acid sequence, 243 residues long: Ubiquinone/menaquinone biosynthesis C-methyltransferase UbiE (243 aa).

Residues Thr-69, Asp-90, and 116–117 (DA) each bind S-adenosyl-L-methionine.

The protein belongs to the class I-like SAM-binding methyltransferase superfamily. MenG/UbiE family.

The enzyme catalyses a 2-demethylmenaquinol + S-adenosyl-L-methionine = a menaquinol + S-adenosyl-L-homocysteine + H(+). It catalyses the reaction a 2-methoxy-6-(all-trans-polyprenyl)benzene-1,4-diol + S-adenosyl-L-methionine = a 5-methoxy-2-methyl-3-(all-trans-polyprenyl)benzene-1,4-diol + S-adenosyl-L-homocysteine + H(+). The protein operates within quinol/quinone metabolism; menaquinone biosynthesis; menaquinol from 1,4-dihydroxy-2-naphthoate: step 2/2. Its pathway is cofactor biosynthesis; ubiquinone biosynthesis. Functionally, methyltransferase required for the conversion of demethylmenaquinol (DMKH2) to menaquinol (MKH2) and the conversion of 2-polyprenyl-6-methoxy-1,4-benzoquinol (DDMQH2) to 2-polyprenyl-3-methyl-6-methoxy-1,4-benzoquinol (DMQH2). The protein is Ubiquinone/menaquinone biosynthesis C-methyltransferase UbiE of Ralstonia nicotianae (strain ATCC BAA-1114 / GMI1000) (Ralstonia solanacearum).